The following is a 216-amino-acid chain: Probable nicotinate-nucleotide adenylyltransferase (216 aa).

The protein belongs to the NadD family.

It carries out the reaction nicotinate beta-D-ribonucleotide + ATP + H(+) = deamido-NAD(+) + diphosphate. It functions in the pathway cofactor biosynthesis; NAD(+) biosynthesis; deamido-NAD(+) from nicotinate D-ribonucleotide: step 1/1. Functionally, catalyzes the reversible adenylation of nicotinate mononucleotide (NaMN) to nicotinic acid adenine dinucleotide (NaAD). In Citrifermentans bemidjiense (strain ATCC BAA-1014 / DSM 16622 / JCM 12645 / Bem) (Geobacter bemidjiensis), this protein is Probable nicotinate-nucleotide adenylyltransferase.